Consider the following 250-residue polypeptide: Eukaryotic translation initiation factor 2 subunit 2 (250 aa).

A C4-type zinc finger spans residues 193 to 217 (CHTCKSPETQLTKDTRLFFLQCTNC).

This sequence belongs to the eIF-2-beta/eIF-5 family. Eukaryotic translation initiation factor 2 eIF2 is a heterotrimeric complex composed of an alpha, a beta and a gamma subunit.

It is found in the cytoplasm. The protein resides in the cytosol. Functionally, component of the eIF2 complex that functions in the early steps of protein synthesis by forming a ternary complex with GTP and initiator tRNA. This complex binds to a 40S ribosomal subunit, followed by mRNA binding to form a 43S pre-initiation complex (43S PIC). Junction of the 60S ribosomal subunit to form the 80S initiation complex is preceded by hydrolysis of the GTP bound to eIF2 and release of an eIF2-GDP binary complex. In order for eIF2 to recycle and catalyze another round of initiation, the GDP bound to eIF2 must exchange with GTP by way of a reaction catalyzed by eIF2B. This chain is Eukaryotic translation initiation factor 2 subunit 2, found in Caenorhabditis elegans.